The sequence spans 149 residues: Small ribosomal subunit protein uS19w (149 aa).

Belongs to the universal ribosomal protein uS19 family.

It is found in the cytoplasm. The sequence is that of Small ribosomal subunit protein uS19w (RPS15E) from Arabidopsis thaliana (Mouse-ear cress).